A 180-amino-acid polypeptide reads, in one-letter code: D-glycero-beta-D-manno-heptose-1,7-bisphosphate 7-phosphatase (180 aa).

Asp-14 (nucleophile) is an active-site residue. Residues Asp-14 and Asp-16 each coordinate Mg(2+). Residues 14–16 (DRD), 22–25 (NDHY), and 56–59 (TNQS) each bind substrate. Catalysis depends on Asp-16, which acts as the Proton donor. Cys-95, His-97, Cys-110, and His-112 together coordinate Zn(2+). Position 113 to 114 (113 to 114 (RK)) interacts with substrate. Position 139 (Asp-139) interacts with Mg(2+).

It belongs to the gmhB family. In terms of assembly, monomer. The cofactor is Mg(2+).

It is found in the cytoplasm. The catalysed reaction is D-glycero-beta-D-manno-heptose 1,7-bisphosphate + H2O = D-glycero-beta-D-manno-heptose 1-phosphate + phosphate. It functions in the pathway nucleotide-sugar biosynthesis; ADP-L-glycero-beta-D-manno-heptose biosynthesis; ADP-L-glycero-beta-D-manno-heptose from D-glycero-beta-D-manno-heptose 7-phosphate: step 2/4. The protein operates within bacterial outer membrane biogenesis; LPS core biosynthesis. Its function is as follows. Converts the D-glycero-beta-D-manno-heptose 1,7-bisphosphate (beta-HBP) intermediate into D-glycero-beta-D-manno-heptose 1-phosphate by removing the phosphate group at the C-7 position. Also catalyzes the dephosphorylation of D-glycero-alpha-D-manno-heptose 1,7-bisphosphate in vitro. This is D-glycero-beta-D-manno-heptose-1,7-bisphosphate 7-phosphatase from Rhodopseudomonas palustris (strain ATCC BAA-98 / CGA009).